A 492-amino-acid chain; its full sequence is Catalase (492 aa).

Residues H65 and N138 contribute to the active site. Y348 contacts heme.

This sequence belongs to the catalase family. As to quaternary structure, homotetramer. Heme serves as cofactor.

It is found in the cytoplasm. Its subcellular location is the cytosol. It localises to the peroxisome matrix. It catalyses the reaction 2 H2O2 = O2 + 2 H2O. In terms of biological role, catalyzes the degradation of hydrogen peroxide (H(2)O(2)) generated by peroxisomal oxidases to water and oxygen, thereby protecting cells from the toxic effects of hydrogen peroxide. This chain is Catalase, found in Ipomoea batatas (Sweet potato).